Consider the following 599-residue polypeptide: PR domain zinc finger protein 5 (599 aa).

The SET domain maps to 8–124 (DRFALKSSRV…TDTELLIGYL (117 aa)). C2H2-type zinc fingers lie at residues 167 to 190 (FACP…QSLH), 199 to 221 (FKCE…FEQH), 231 to 256 (FVCK…ENVH), 264 to 286 (LICS…RKIH), 289 to 311 (FDCQ…MITH), 317 to 339 (YNCE…KVIH), 345 to 367 (YQCK…KKTH), 373 to 395 (FQCD…LLIH), 401 to 424 (FKCH…QVVH), 430 to 452 (YRCE…KKTH), 458 to 480 (KVCP…IRSH), and 486 to 508 (YQCP…IRTH). The C2H2-type 13; degenerate zinc finger occupies 514–536 (YQCSECSKAFSQKRGLDEHKRTH). 2 C2H2-type zinc fingers span residues 542-564 (FQCD…KMTH) and 571-594 (AECH…DNIH).

Belongs to the class V-like SAM-binding methyltransferase superfamily. As to quaternary structure, interacts with EHMT2/G9A, GFI1 and HDAC1.

The protein resides in the nucleus. Sequence-specific DNA-binding transcription factor. Represses transcription at least in part by recruitment of the histone methyltransferase EHMT2/G9A and histone deacetylases such as HDAC1. Regulates hematopoiesis-associated protein-coding and microRNA (miRNA) genes. May regulate the expression of proteins involved in extracellular matrix development and maintenance, connective tissue components and molecules regulating cell migration and adhesion. May cause G2/M arrest and apoptosis in cancer cells. This chain is PR domain zinc finger protein 5 (Prdm5), found in Mus musculus (Mouse).